Reading from the N-terminus, the 414-residue chain is tRNA methyltransferase 10 homolog C (414 aa).

The N-terminal 35 residues, 1–35, are a transit peptide targeting the mitochondrion; it reads MNVTVRFLRPFARYLVPYTFHRTRSNSYSRVLQRY. A Phosphoserine modification is found at serine 79. A coiled-coil region spans residues 133–162; sequence GKEMMKKAKQMKKEMKAAAREEAKRARSLE. The region spanning 186-378 is the SAM-dependent MTase TRM10-type domain; sequence LGWKGVQAMQ…KFVPRRKHTG (193 aa).

Belongs to the class IV-like SAM-binding methyltransferase superfamily. TRM10 family. In terms of assembly, component of mitochondrial ribonuclease P, a complex composed of TRMT10C/MRPP1, HSD17B10/MRPP2 and PRORP/MRPP3. Interacts with HSD17B10/MRPP2; forming the MRPP1-MRPP2 subcomplex of the mitochondrial ribonuclease P complex. Interacts with GRSF1.

It localises to the mitochondrion matrix. It is found in the mitochondrion nucleoid. It catalyses the reaction adenosine(9) in tRNA + S-adenosyl-L-methionine = N(1)-methyladenosine(9) in tRNA + S-adenosyl-L-homocysteine + H(+). The enzyme catalyses guanosine(9) in tRNA + S-adenosyl-L-methionine = N(1)-methylguanosine(9) in tRNA + S-adenosyl-L-homocysteine + H(+). The catalysed reaction is an adenosine in mRNA + S-adenosyl-L-methionine = an N(1)-methyladenosine in mRNA + S-adenosyl-L-homocysteine + H(+). Functionally, mitochondrial tRNA N(1)-methyltransferase involved in mitochondrial tRNA maturation. Component of mitochondrial ribonuclease P, a complex composed of TRMT10C/MRPP1, HSD17B10/MRPP2 and PRORP/MRPP3, which cleaves tRNA molecules in their 5'-ends. Together with HSD17B10/MRPP2, forms a subcomplex of the mitochondrial ribonuclease P, named MRPP1-MRPP2 subcomplex, which displays functions that are independent of the ribonuclease P activity. The MRPP1-MRPP2 subcomplex catalyzes the formation of N(1)-methylguanine and N(1)-methyladenine at position 9 (m1G9 and m1A9, respectively) in tRNAs; TRMT10C/MRPP1 acting as the catalytic N(1)-methyltransferase subunit. The MRPP1-MRPP2 subcomplex also acts as a tRNA maturation platform: following 5'-end cleavage by the mitochondrial ribonuclease P complex, the MRPP1-MRPP2 subcomplex enhances the efficiency of 3'-processing catalyzed by ELAC2, retains the tRNA product after ELAC2 processing and presents the nascent tRNA to the mitochondrial CCA tRNA nucleotidyltransferase TRNT1 enzyme. In addition to tRNA N(1)-methyltransferase activity, TRMT10C/MRPP1 also acts as a mRNA N(1)-methyltransferase by mediating methylation of adenosine residues at the N(1) position of MT-ND5 mRNA. Associates with mitochondrial DNA complexes at the nucleoids to initiate RNA processing and ribosome assembly. This chain is tRNA methyltransferase 10 homolog C, found in Rattus norvegicus (Rat).